The sequence spans 467 residues: 5-phosphohydroxy-L-lysine phospho-lyase (467 aa).

K278 bears the N6-(pyridoxal phosphate)lysine mark.

It belongs to the class-III pyridoxal-phosphate-dependent aminotransferase family. As to quaternary structure, homotetramer. Pyridoxal 5'-phosphate serves as cofactor.

It localises to the mitochondrion. The enzyme catalyses (5R)-5-phosphooxy-L-lysine + H2O = (S)-2-amino-6-oxohexanoate + NH4(+) + phosphate. Catalyzes the pyridoxal-phosphate-dependent breakdown of 5-phosphohydroxy-L-lysine, converting it to ammonia, inorganic phosphate and 2-aminoadipate semialdehyde. In Mus musculus (Mouse), this protein is 5-phosphohydroxy-L-lysine phospho-lyase (Phykpl).